A 272-amino-acid polypeptide reads, in one-letter code: 2-C-methyl-D-erythritol 4-phosphate cytidylyltransferase (272 aa).

The protein belongs to the IspD/TarI cytidylyltransferase family. IspD subfamily.

It carries out the reaction 2-C-methyl-D-erythritol 4-phosphate + CTP + H(+) = 4-CDP-2-C-methyl-D-erythritol + diphosphate. It participates in isoprenoid biosynthesis; isopentenyl diphosphate biosynthesis via DXP pathway; isopentenyl diphosphate from 1-deoxy-D-xylulose 5-phosphate: step 2/6. Functionally, catalyzes the formation of 4-diphosphocytidyl-2-C-methyl-D-erythritol from CTP and 2-C-methyl-D-erythritol 4-phosphate (MEP). This chain is 2-C-methyl-D-erythritol 4-phosphate cytidylyltransferase, found in Xanthomonas oryzae pv. oryzae (strain PXO99A).